A 401-amino-acid chain; its full sequence is Voltage-gated potassium channel subunit beta-1 (401 aa).

NADP(+)-binding residues include Thr90, Trp91, Gln97, and Asp119. Tyr124 serves as the catalytic Proton donor/acceptor. Asn192, Ser222, Arg223, Gln248, Trp277, Ser278, Pro279, Leu280, Ala281, Cys282, Lys288, Arg298, Gly357, Ser359, Gln363, Glu366, and Asn367 together coordinate NADP(+).

Belongs to the shaker potassium channel beta subunit family. In terms of assembly, homotetramer. Interaction with tetrameric potassium channel alpha subunits gives rise to a heterooctamer. Identified in potassium channel complexes containing KCNA1, KCNA2, KCNA4, KCNA5, KCNA6, KCNAB1 and KCNAB2. Part of a complex containing KCNA1, KCNA4 and LGI1; interaction with LGI1 inhibits down-regulation of KCNA1 channel activity. Interacts with the dimer formed by GNB1 and GNG2; this enhances KCNA1 binding. Interacts with SQSTM1.

It is found in the cytoplasm. Its subcellular location is the membrane. The protein resides in the cell membrane. The enzyme catalyses a primary alcohol + NADP(+) = an aldehyde + NADPH + H(+). It catalyses the reaction a secondary alcohol + NADP(+) = a ketone + NADPH + H(+). Functionally, regulatory subunit of the voltage-gated potassium (Kv) channels composed of pore-forming and potassium-conducting alpha subunits and of regulatory beta subunits. The beta-1/KCNAB1 cytoplasmic subunit mediates closure of delayed rectifier potassium channels by physically obstructing the pore via its N-terminal domain and increases the speed of channel closure for other family members. Promotes the inactivation of KCNA1, KCNA2, KCNA4, KCNA5 and KCNA6 alpha subunit-containing channels. Displays nicotinamide adenine dinucleotide phosphate (NADPH)-dependent aldoketoreductase activity by catalyzing the NADPH-dependent reduction of a variety of endogenous aldehydes and ketones. The binding of NADPH is required for efficient down-regulation of potassium channel activity. Oxidation of the bound NADPH restrains N-terminal domain from blocking the channel, thereby decreasing N-type inactivation of potassium channel activity. This is Voltage-gated potassium channel subunit beta-1 (KCNAB1) from Bos taurus (Bovine).